The chain runs to 194 residues: dCTP deaminase, dUMP-forming (194 aa).

DCTP is bound by residues R105 to R110, D123, T131 to E133, Q152, Y166, K174, and Q178. E133 functions as the Proton donor/acceptor in the catalytic mechanism.

Belongs to the dCTP deaminase family. As to quaternary structure, homotrimer.

The enzyme catalyses dCTP + 2 H2O = dUMP + NH4(+) + diphosphate. Its pathway is pyrimidine metabolism; dUMP biosynthesis; dUMP from dCTP: step 1/1. Functionally, bifunctional enzyme that catalyzes both the deamination of dCTP to dUTP and the hydrolysis of dUTP to dUMP without releasing the toxic dUTP intermediate. The protein is dCTP deaminase, dUMP-forming of Methanobrevibacter smithii (strain ATCC 35061 / DSM 861 / OCM 144 / PS).